A 349-amino-acid polypeptide reads, in one-letter code: Farnesyl pyrophosphate synthase vrtD (349 aa).

Isopentenyl diphosphate-binding residues include K53, R56, and Q92. D99 and D103 together coordinate Mg(2+). R108 is a dimethylallyl diphosphate binding site. R109 contributes to the isopentenyl diphosphate binding site. K196, T197, Q236, K253, and K262 together coordinate dimethylallyl diphosphate.

It belongs to the FPP/GGPP synthase family. Requires Mg(2+) as cofactor.

The catalysed reaction is isopentenyl diphosphate + dimethylallyl diphosphate = (2E)-geranyl diphosphate + diphosphate. The enzyme catalyses isopentenyl diphosphate + (2E)-geranyl diphosphate = (2E,6E)-farnesyl diphosphate + diphosphate. It functions in the pathway secondary metabolite biosynthesis; terpenoid biosynthesis. Farnesyl pyrophosphate synthase; part of the gene cluster that mediates the biosynthesis of viridicatumtoxin, a tetracycline-like fungal meroterpenoid with a unique, fused spirobicyclic ring system. The first step of the pathway is the production of the malonamoyl-CoA starter unit for the polyketide synthase vrtA. The aldolase vrtJ may be involved in the synthesis of the malonamate substrate for malonamoyl-CoA synthetase vrtB. The polyketide synthase vrtA then may utilize the malonamoyl-CoA starter unit, followed by sequential condensation of eight malonyl-CoA units to form the polyketide backbone. The cyclization of the last ring could be mediated by the lactamase-like protein vrtG. The proposed post-PKS tailoring steps are a hydroxylation at C5 catalyzed the cytochrome P450 monooxygenase vrtE, a hydroxylation at C12a catalyzed by VrtH and/or VrtI, and an O-methylation by the O-methyltransferase vrtF. VrtC is then proposed to catalyze the transfer of a geranyl group synthesized by vrtD to the aromatic C ring of the tetracyclic polyketide intermediate of viridicatumtoxin to yield previridicatumtoxin. Finally, the cytochrome P450 monooxygenase vrtK catalyzes the spirocyclization of the geranyl moiety of previridicatumtoxin to afford viridicatumtoxin. This is Farnesyl pyrophosphate synthase vrtD from Penicillium aethiopicum.